The sequence spans 482 residues: Exodeoxyribonuclease 7 large subunit (482 aa).

The interval 457–482 is disordered; sequence TLDTGGAPAKPASKPKQKPPEQGSLF.

The protein belongs to the XseA family. In terms of assembly, heterooligomer composed of large and small subunits.

The protein localises to the cytoplasm. It catalyses the reaction Exonucleolytic cleavage in either 5'- to 3'- or 3'- to 5'-direction to yield nucleoside 5'-phosphates.. Bidirectionally degrades single-stranded DNA into large acid-insoluble oligonucleotides, which are then degraded further into small acid-soluble oligonucleotides. This is Exodeoxyribonuclease 7 large subunit from Ruegeria pomeroyi (strain ATCC 700808 / DSM 15171 / DSS-3) (Silicibacter pomeroyi).